Here is a 387-residue protein sequence, read N- to C-terminus: ADP,ATP carrier protein 2, mitochondrial (387 aa).

The transit peptide at 1–77 (MADQANQPTV…PVMPTPLFAN (77 aa)) directs the protein to the mitochondrion. 3 Solcar repeats span residues 85–178 (KNFM…FKRL), 190–282 (KWFA…IKPV), and 290–376 (DNFF…LQIL). The next 5 membrane-spanning stretches (helical) occupy residues 87–114 (FMID…VKLL), 155–179 (TANV…KRLF), 188–208 (YWKW…SSLF), 258–279 (FNIS…YDSI), and 293–313 (FASF…SYPI). Residues R160 and K172 each contribute to the ADP site. Residue R317 coordinates ADP. The tract at residues 317-322 (RRRMMM) is important for transport activity. Residues 317 to 322 (RRRMMM) carry the Nucleotide carrier signature motif motif. A helical transmembrane segment spans residues 353 to 373 (AGANILRAIAGAGVLSGYDQL).

Belongs to the mitochondrial carrier (TC 2.A.29) family. In terms of assembly, monomer.

The protein resides in the mitochondrion inner membrane. It catalyses the reaction ADP(in) + ATP(out) = ADP(out) + ATP(in). Its activity is regulated as follows. The matrix-open state (m-state) is inhibited by the membrane-permeable bongkrekic acid (BKA). The cytoplasmic-open state (c-state) is inhibited by the membrane-impermeable toxic inhibitor carboxyatractyloside (CATR). In terms of biological role, ADP:ATP antiporter that mediates import of ADP into the mitochondrial matrix for ATP synthesis, and export of ATP out to fuel the cell. Cycles between the cytoplasmic-open state (c-state) and the matrix-open state (m-state): operates by the alternating access mechanism with a single substrate-binding site intermittently exposed to either the cytosolic (c-state) or matrix (m-state) side of the inner mitochondrial membrane. The polypeptide is ADP,ATP carrier protein 2, mitochondrial (ANT2) (Zea mays (Maize)).